A 317-amino-acid polypeptide reads, in one-letter code: Methionyl-tRNA formyltransferase (317 aa).

(6S)-5,6,7,8-tetrahydrofolate is bound at residue 112 to 115 (SLLP).

The protein belongs to the Fmt family.

The enzyme catalyses L-methionyl-tRNA(fMet) + (6R)-10-formyltetrahydrofolate = N-formyl-L-methionyl-tRNA(fMet) + (6S)-5,6,7,8-tetrahydrofolate + H(+). In terms of biological role, attaches a formyl group to the free amino group of methionyl-tRNA(fMet). The formyl group appears to play a dual role in the initiator identity of N-formylmethionyl-tRNA by promoting its recognition by IF2 and preventing the misappropriation of this tRNA by the elongation apparatus. The protein is Methionyl-tRNA formyltransferase of Histophilus somni (strain 2336) (Haemophilus somnus).